The sequence spans 122 residues: Large ribosomal subunit protein uL18 (122 aa).

Belongs to the universal ribosomal protein uL18 family. Part of the 50S ribosomal subunit; part of the 5S rRNA/L5/L18/L25 subcomplex. Contacts the 5S and 23S rRNAs.

Functionally, this is one of the proteins that bind and probably mediate the attachment of the 5S RNA into the large ribosomal subunit, where it forms part of the central protuberance. The polypeptide is Large ribosomal subunit protein uL18 (Dictyoglomus turgidum (strain DSM 6724 / Z-1310)).